We begin with the raw amino-acid sequence, 150 residues long: Cytochrome c oxidase subunit 5A, mitochondrial (150 aa).

Residues 1-41 (MLGAALRRCAVAATTRAGPRGLLHSARTPGPAAAIQSVRCY) constitute a mitochondrion transit peptide. Positions 2–17 (LGAALRRCAVAATTRA) match the SIFI-degron motif. An N6-acetyllysine mark is found at K87 and K113. T141 carries the phosphothreonine modification.

The protein belongs to the cytochrome c oxidase subunit 5A family. Component of the cytochrome c oxidase (complex IV, CIV), a multisubunit enzyme composed of 14 subunits. The complex is composed of a catalytic core of 3 subunits MT-CO1, MT-CO2 and MT-CO3, encoded in the mitochondrial DNA, and 11 supernumerary subunits COX4I, COX5A, COX5B, COX6A, COX6B, COX6C, COX7A, COX7B, COX7C, COX8 and NDUFA4, which are encoded in the nuclear genome. The complex exists as a monomer or a dimer and forms supercomplexes (SCs) in the inner mitochondrial membrane with NADH-ubiquinone oxidoreductase (complex I, CI) and ubiquinol-cytochrome c oxidoreductase (cytochrome b-c1 complex, complex III, CIII), resulting in different assemblies (supercomplex SCI(1)III(2)IV(1) and megacomplex MCI(2)III(2)IV(2)). Interacts with AFG1L. Interacts with RAB5IF. In terms of processing, in response to mitochondrial stress, the precursor protein is ubiquitinated by the SIFI complex in the cytoplasm before mitochondrial import, leading to its degradation. Within the SIFI complex, UBR4 initiates ubiquitin chain that are further elongated or branched by KCMF1.

It localises to the mitochondrion inner membrane. Its pathway is energy metabolism; oxidative phosphorylation. In terms of biological role, component of the cytochrome c oxidase, the last enzyme in the mitochondrial electron transport chain which drives oxidative phosphorylation. The respiratory chain contains 3 multisubunit complexes succinate dehydrogenase (complex II, CII), ubiquinol-cytochrome c oxidoreductase (cytochrome b-c1 complex, complex III, CIII) and cytochrome c oxidase (complex IV, CIV), that cooperate to transfer electrons derived from NADH and succinate to molecular oxygen, creating an electrochemical gradient over the inner membrane that drives transmembrane transport and the ATP synthase. Cytochrome c oxidase is the component of the respiratory chain that catalyzes the reduction of oxygen to water. Electrons originating from reduced cytochrome c in the intermembrane space (IMS) are transferred via the dinuclear copper A center (CU(A)) of subunit 2 and heme A of subunit 1 to the active site in subunit 1, a binuclear center (BNC) formed by heme A3 and copper B (CU(B)). The BNC reduces molecular oxygen to 2 water molecules using 4 electrons from cytochrome c in the IMS and 4 protons from the mitochondrial matrix. The sequence is that of Cytochrome c oxidase subunit 5A, mitochondrial (COX5A) from Pan troglodytes (Chimpanzee).